A 199-amino-acid chain; its full sequence is Putative inactive ribonuclease 11 (199 aa).

Positions 1 to 16 are cleaved as a signal peptide; the sequence is METFPLLLLSLGLVLA. Asn61 carries N-linked (GlcNAc...) asparagine glycosylation. His82 (proton acceptor) is an active-site residue. Asn89 and Asn111 each carry an N-linked (GlcNAc...) asparagine glycan. 2 disulfide bridges follow: Cys98–Cys158 and Cys114–Cys169. 115–119 is a binding site for substrate; the sequence is KWSNN.

Belongs to the pancreatic ribonuclease family.

The protein resides in the secreted. This Homo sapiens (Human) protein is Putative inactive ribonuclease 11 (RNASE11).